Reading from the N-terminus, the 301-residue chain is Transcription elongation factor A protein 1 (301 aa).

Met1 carries the N-acetylmethionine modification. Residues 3 to 80 (DEVVRIAKKM…KSWKKLLDGP (78 aa)) form the TFIIS N-terminal domain. A Glycyl lysine isopeptide (Lys-Gly) (interchain with G-Cter in ubiquitin) cross-link involves residue Lys55. A phosphoserine mark is found at Ser57, Ser81, Ser97, and Ser100. Basic and acidic residues predominate over residues 76-93 (LLDGPSTDKDPEEKKKEP). Residues 76 to 139 (LLDGPSTDKD…FPRAPSTSDS (64 aa)) are disordered. Residues 140-256 (VRLKCREMLA…EHQMAKTGGT (117 aa)) form the TFIIS central domain. Residues 259 to 299 (DLFTCGKCKKKNCTYTQVQTRSADEPMTTFVVCNECGNRWK) form a TFIIS-type zinc finger. Zn(2+)-binding residues include Cys263, Cys266, Cys291, and Cys294.

It belongs to the TFS-II family. As to quaternary structure, interacts with EAF2. Associates with UBR5 and forms a transcription regulatory complex made of CDK9, Pol II, UBR5 and TCEA1/TFIIS. Part of TBP-based Pol II pre-initiation complex (PIC), in which Pol II core assembles with general transcription factors and other specific initiation factors including GTF2E1, GTF2E2, GTF2F1, GTF2F2, TCEA1, ERCC2, ERCC3, GTF2H2, GTF2H3, GTF2H4, GTF2H5, GTF2A1, GTF2A2, GTF2B and TBP; this large multi-subunit PIC complex mediates DNA unwinding and targets Pol II core to the transcription start site where the first phosphodiester bond forms.

Its subcellular location is the nucleus. Necessary for efficient RNA polymerase II transcription elongation past template-encoded arresting sites. The arresting sites in DNA have the property of trapping a certain fraction of elongating RNA polymerases that pass through, resulting in locked ternary complexes. Cleavage of the nascent transcript by S-II allows the resumption of elongation from the new 3'-terminus. The protein is Transcription elongation factor A protein 1 (Tcea1) of Mus musculus (Mouse).